The sequence spans 141 residues: Putative antiporter subunit mnhB2 (141 aa).

Helical transmembrane passes span 10–30, 35–55, 70–90, and 116–136; these read SVTK…FFAG, GGGF…FLAF, KLMI…MFFG, and LFEL…MLSI.

Belongs to the CPA3 antiporters (TC 2.A.63) subunit B family. May form a heterooligomeric complex that consists of seven subunits: mnhA2, mnhB2, mnhC2, mnhD2, mnhE2, mnhF2 and mnhG2.

Its subcellular location is the cell membrane. This is Putative antiporter subunit mnhB2 (mnhB2) from Staphylococcus epidermidis (strain ATCC 35984 / DSM 28319 / BCRC 17069 / CCUG 31568 / BM 3577 / RP62A).